Reading from the N-terminus, the 341-residue chain is Protein FAM50A (341 aa).

Disordered regions lie at residues 1 to 27 (MAQY…EREQ) and 80 to 147 (LVKE…EIEE). A compositionally biased stretch (basic and acidic residues) spans 80–115 (LVKEREKQLAKKEQSKELQLKLEKQKEKKRKEEQKR). Over residues 125 to 147 (DEGEDEEEEEEEEEEEEEDEIEE) the composition is skewed to acidic residues.

Belongs to the FAM50 family.

The protein localises to the nucleus. In terms of biological role, probably involved in the regulation of pre-mRNA splicing. The protein is Protein FAM50A (fam50a) of Danio rerio (Zebrafish).